Here is a 581-residue protein sequence, read N- to C-terminus: Frizzled-3 (581 aa).

Positions Met1–Ala19 are cleaved as a signal peptide. Over Ala20–Thr237 the chain is Extracellular. The 122-residue stretch at Pro35–Ile156 folds into the FZ domain. Disulfide bonds link Cys40/Cys101, Cys48/Cys94, Cys85/Cys123, Cys112/Cys153, and Cys116/Cys141. An N-linked (GlcNAc...) asparagine glycan is attached at Asn54. Asn206 carries an N-linked (GlcNAc...) asparagine glycan. The chain crosses the membrane as a helical span at residues Leu238–Trp258. Over Ala259–Pro270 the chain is Cytoplasmic. A helical transmembrane segment spans residues Val271–Phe291. At His292–Tyr321 the chain is on the extracellular side. The helical transmembrane segment at Ile322 to Phe342 threads the bilayer. Residues Tyr343 to Ser359 are Cytoplasmic-facing. Residues Gly360–Leu380 form a helical membrane-spanning segment. At Glu381–Tyr393 the chain is on the extracellular side. A helical membrane pass occupies residues Ala394 to Leu414. Topologically, residues Arg415–Arg442 are cytoplasmic. Residues Phe443–Cys463 form a helical membrane-spanning segment. Over Glu464–Trp488 the chain is Extracellular. Residues Pro489–Trp509 form a helical membrane-spanning segment. The Cytoplasmic segment spans residues Ser510 to Val581. The PDZ-binding signature appears at Ser579–Val581.

Belongs to the G-protein coupled receptor Fz/Smo family. Wing, leg and eye imaginal disks. In embryos, expressed is seen in brain, proventriculus, Malpighian tubules, anal plate and visceral mesoderm of parasegment 8.

It is found in the membrane. In terms of biological role, receptor for Wnt proteins. Most of frizzled receptors are coupled to the beta-catenin canonical signaling pathway, which leads to the activation of disheveled proteins, inhibition of GSK-3 kinase, nuclear accumulation of beta-catenin and activation of Wnt target genes. A second signaling pathway involving PKC and calcium fluxes has been seen for some family members, but it is not yet clear if it represents a distinct pathway or if it can be integrated in the canonical pathway, as PKC seems to be required for Wnt-mediated inactivation of GSK-3 kinase. Both pathways seem to involve interactions with G-proteins. Required to coordinate the cytoskeletons of epidermal cells to produce a parallel array of cuticular hairs and bristles. This is Frizzled-3 (fz3) from Drosophila melanogaster (Fruit fly).